Here is a 180-residue protein sequence, read N- to C-terminus: UPF0227 protein Shew_1627 (180 aa).

The protein belongs to the UPF0227 family.

This Shewanella loihica (strain ATCC BAA-1088 / PV-4) protein is UPF0227 protein Shew_1627.